Here is a 159-residue protein sequence, read N- to C-terminus: C-type lectin BJcuL (159 aa).

A signal peptide spans 1–24 (MGRFLFVASSACWFVFLSLSGAKG). 4 disulfide bridges follow: Cys-27/Cys-38, Cys-55/Cys-155, Cys-62/Cys-157, and Cys-130/Cys-147. A C-type lectin domain is found at 34–156 (MNGLCYKIFN…CESKNAFLCQ (123 aa)). Residues Gln-120, Asp-122, Glu-128, Asn-143, and Asp-144 each contribute to the Ca(2+) site. The Galactose-binding signature appears at 120-122 (QPD).

Belongs to the true venom lectin family. Homodecamer of disulfide-linked dimers arranged in two 5-fold symmetric pentamers. Binds the gentamicin group of aminoglycoside antibiotics at the dimeric interface near the intermolecular disulfide bond. As to expression, expressed by the venom gland.

The protein localises to the secreted. Hemagglutination activity is inhibited by lactose (MIC=2.5 mM), galactose (MIC=10 mM), and raffinose. Is very weakly or not inhibited by gentamicin, kanamycin, glucose and sucrose. In terms of biological role, galactose-binding lectin which recognizes specific carbohydrate structures and agglutinates a variety of animal cells by binding to cell-surface glycoproteins and glycolipids. Calcium-dependent lectin. Also binds lactose and raffinose. Shows high hemagglutinating activity on mammalian erythrocytes. It also involved in immunological functions, since it is able of inducing potent neutrophil activation. In vivo, it causes edema and increases vascular permeability after injection into mouse hind paws (10-100 ug/paw). In anesthetized rats, it decreases the blood pressure by approximately 15%, with a rapid return to the resting level. Is an effective inhibitor of cell growth in some cancer cell lines, especially against renal and pancreatic cancer cell lines, human breast and ovarian carcinoma, glioblastoma and a bovine brain microvascular endothelial cell line. This is C-type lectin BJcuL from Bothrops jararacussu (Jararacussu).